Reading from the N-terminus, the 40-residue chain is Photosystem II reaction center protein J (40 aa).

Residues 8 to 28 form a helical membrane-spanning segment; the sequence is IPLWIIGTVAGIPVIGLIGIF.

Belongs to the PsbJ family. In terms of assembly, PSII is composed of 1 copy each of membrane proteins PsbA, PsbB, PsbC, PsbD, PsbE, PsbF, PsbH, PsbI, PsbJ, PsbK, PsbL, PsbM, PsbT, PsbX, PsbY, PsbZ, Psb30/Ycf12, at least 3 peripheral proteins of the oxygen-evolving complex and a large number of cofactors. It forms dimeric complexes.

Its subcellular location is the plastid. The protein localises to the chloroplast thylakoid membrane. In terms of biological role, one of the components of the core complex of photosystem II (PSII). PSII is a light-driven water:plastoquinone oxidoreductase that uses light energy to abstract electrons from H(2)O, generating O(2) and a proton gradient subsequently used for ATP formation. It consists of a core antenna complex that captures photons, and an electron transfer chain that converts photonic excitation into a charge separation. The sequence is that of Photosystem II reaction center protein J from Pelargonium hortorum (Common geranium).